Reading from the N-terminus, the 103-residue chain is Co-chaperonin GroES (103 aa).

This sequence belongs to the GroES chaperonin family. As to quaternary structure, heptamer of 7 subunits arranged in a ring. Interacts with the chaperonin GroEL.

The protein resides in the cytoplasm. Functionally, together with the chaperonin GroEL, plays an essential role in assisting protein folding. The GroEL-GroES system forms a nano-cage that allows encapsulation of the non-native substrate proteins and provides a physical environment optimized to promote and accelerate protein folding. GroES binds to the apical surface of the GroEL ring, thereby capping the opening of the GroEL channel. This Crocosphaera subtropica (strain ATCC 51142 / BH68) (Cyanothece sp. (strain ATCC 51142)) protein is Co-chaperonin GroES.